The chain runs to 300 residues: Ribosomal RNA small subunit methyltransferase H (300 aa).

Residues 33 to 35 (GGH), D53, F78, D97, and Q104 each bind S-adenosyl-L-methionine.

It belongs to the methyltransferase superfamily. RsmH family.

Its subcellular location is the cytoplasm. The enzyme catalyses cytidine(1402) in 16S rRNA + S-adenosyl-L-methionine = N(4)-methylcytidine(1402) in 16S rRNA + S-adenosyl-L-homocysteine + H(+). In terms of biological role, specifically methylates the N4 position of cytidine in position 1402 (C1402) of 16S rRNA. The chain is Ribosomal RNA small subunit methyltransferase H from Karelsulcia muelleri (strain GWSS) (Sulcia muelleri).